A 278-amino-acid polypeptide reads, in one-letter code: NAD kinase (278 aa).

Asp67 acts as the Proton acceptor in catalysis. Residues Asp67–Gly68, Arg72, Asn137–Glu138, Lys148, Arg165, Asp167, Thr178–Ser183, Ala202, and Gln237 each bind NAD(+).

The protein belongs to the NAD kinase family. A divalent metal cation is required as a cofactor.

The protein resides in the cytoplasm. The enzyme catalyses NAD(+) + ATP = ADP + NADP(+) + H(+). Its function is as follows. Involved in the regulation of the intracellular balance of NAD and NADP, and is a key enzyme in the biosynthesis of NADP. Catalyzes specifically the phosphorylation on 2'-hydroxyl of the adenosine moiety of NAD to yield NADP. The sequence is that of NAD kinase from Thermococcus kodakarensis (strain ATCC BAA-918 / JCM 12380 / KOD1) (Pyrococcus kodakaraensis (strain KOD1)).